The following is a 537-amino-acid chain: MAWPGTGPSSRGAPGGVGLRLGLLLQFLLLLRPTLGFGDEEERRCDPIRIAMCQNLGYNVTKMPNLVGHELQTDAELQLTTFTPLIQYGCSSQLQFFLCSVYVPMCTEKINIPIGPCGGMCLSVKRRCEPVLREFGFAWPDTLNCSKFPPQNDHNHMCMEGPGDEEVPLPHKTPIQPGEECHSVGSNSDQYIWVKRSLNCVLKCGYDAGLYSRSAKEFTDIWMAVWASLCFISTTFTVLTFLIDSSRFSYPERPIIFLSMCYNIYSIAYIVRLTVGRERISCDFEEAAEPVLIQEGLKNTGCAIIFLLMYFFGMASSIWWVILTLTWFLAAGLKWGHEAIEMHSSYFHIAAWAIPAVKTIVILIMRLVDADELTGLCYVGNQNLDALTGFVVAPLFTYLVIGTLFIAAGLVALFKIRSNLQKDGTKTDKLERLMVKIGVFSVLYTVPATCVIACYFYEISNWALFRYSADDSNMAVEMLKIFMSLLVGITSGMWIWSAKTLHTWQKCSNRLVNSGKVKREKRGNGWVKPGKGNETVV.

The signal sequence occupies residues 1–36 (MAWPGTGPSSRGAPGGVGLRLGLLLQFLLLLRPTLG). The Extracellular segment spans residues 37 to 212 (FGDEEERRCD…KCGYDAGLYS (176 aa)). In terms of domain architecture, FZ spans 40–161 (EEERRCDPIR…NDHNHMCMEG (122 aa)). Intrachain disulfides connect Cys-45–Cys-106, Cys-53–Cys-99, Cys-90–Cys-128, Cys-117–Cys-158, Cys-121–Cys-145, Cys-181–Cys-200, Cys-204–Cys-282, and Cys-302–Cys-377. Asn-59 is a glycosylation site (N-linked (GlcNAc...) asparagine). An N-linked (GlcNAc...) asparagine glycan is attached at Asn-144. The chain crosses the membrane as a helical span at residues 213–243 (RSAKEFTDIWMAVWASLCFISTTFTVLTFLI). Over 244 to 249 (DSSRFS) the chain is Cytoplasmic. The chain crosses the membrane as a helical span at residues 250–275 (YPERPIIFLSMCYNIYSIAYIVRLTV). At 276-299 (GRERISCDFEEAAEPVLIQEGLKN) the chain is on the extracellular side. The chain crosses the membrane as a helical span at residues 300-333 (TGCAIIFLLMYFFGMASSIWWVILTLTWFLAAGL). Residues 334–336 (KWG) are Cytoplasmic-facing. Residues 337–365 (HEAIEMHSSYFHIAAWAIPAVKTIVILIM) traverse the membrane as a helical segment. Topologically, residues 366-383 (RLVDADELTGLCYVGNQN) are extracellular. Residues 384–410 (LDALTGFVVAPLFTYLVIGTLFIAAGL) form a helical membrane-spanning segment. Topologically, residues 411–431 (VALFKIRSNLQKDGTKTDKLE) are cytoplasmic. Residues 432–460 (RLMVKIGVFSVLYTVPATCVIACYFYEIS) form a helical membrane-spanning segment. The Extracellular segment spans residues 461–473 (NWALFRYSADDSN). A helical transmembrane segment spans residues 474-495 (MAVEMLKIFMSLLVGITSGMWI). Residues 496-537 (WSAKTLHTWQKCSNRLVNSGKVKREKRGNGWVKPGKGNETVV) are Cytoplasmic-facing. The short motif at 499–504 (KTLHTW) is the Lys-Thr-X-X-X-Trp motif, mediates interaction with the PDZ domain of Dvl family members element. The PDZ-binding motif lies at 535-537 (TVV).

This sequence belongs to the G-protein coupled receptor Fz/Smo family. As to quaternary structure, interacts with MAGI3 and NDP. Component of a complex, at least composed of TSPAN12, FZD4 and norrin (NDP). Interacts (via FZ domain) with TSKU; TSKU competes with WNT2B for binding to FZD4, inhibiting Wnt signaling and repressing peripheral eye development. Interacts with glypican GPC3. In terms of processing, ubiquitinated by ZNRF3, leading to its degradation by the proteasome. In terms of tissue distribution, expressed in chondrocytes.

It localises to the cell membrane. Receptor for Wnt proteins. Most frizzled receptors are coupled to the beta-catenin (CTNNB1) canonical signaling pathway, which leads to the activation of disheveled proteins, inhibition of GSK-3 kinase, nuclear accumulation of beta-catenin (CTNNB1) and activation of Wnt target genes. Plays a critical role in retinal vascularization by acting as a receptor for Wnt proteins and norrin (NDP). In retina, it can be activated by Wnt protein-binding and also by Wnt-independent signaling via binding of norrin (NDP), promoting in both cases beta-catenin (CTNNB1) accumulation and stimulation of LEF/TCF-mediated transcriptional programs. A second signaling pathway involving PKC and calcium fluxes has been seen for some family members, but it is not yet clear if it represents a distinct pathway or if it can be integrated in the canonical pathway, as PKC seems to be required for Wnt-mediated inactivation of GSK-3 kinase. Both pathways seem to involve interactions with G-proteins. May be involved in transduction and intercellular transmission of polarity information during tissue morphogenesis and/or in differentiated tissues. Activation by Wnt5A stimulates PKC activity via a G-protein-dependent mechanism. This is Frizzled-4 (Fzd4) from Mus musculus (Mouse).